Here is a 774-residue protein sequence, read N- to C-terminus: 5-methyltetrahydropteroyltriglutamate--homocysteine methyltransferase (774 aa).

Residues 23–26 and Lys123 contribute to the 5-methyltetrahydropteroyltri-L-glutamate site; that span reads RELK. Residues 446–448 and Glu499 each bind L-homocysteine; that span reads IGS. L-methionine is bound by residues 446 to 448 and Glu499; that span reads IGS. 5-methyltetrahydropteroyltri-L-glutamate contacts are provided by residues 530 to 531 and Trp576; that span reads RC. Asp614 contacts L-homocysteine. Residue Asp614 coordinates L-methionine. Glu620 lines the 5-methyltetrahydropteroyltri-L-glutamate pocket. His656, Cys658, and Glu680 together coordinate Zn(2+). The active-site Proton donor is the His709. Cys741 contacts Zn(2+).

It belongs to the vitamin-B12 independent methionine synthase family. Requires Zn(2+) as cofactor.

The enzyme catalyses 5-methyltetrahydropteroyltri-L-glutamate + L-homocysteine = tetrahydropteroyltri-L-glutamate + L-methionine. It functions in the pathway amino-acid biosynthesis; L-methionine biosynthesis via de novo pathway; L-methionine from L-homocysteine (MetE route): step 1/1. Functionally, catalyzes the transfer of a methyl group from 5-methyltetrahydrofolate to homocysteine resulting in methionine formation. This Aliivibrio fischeri (strain ATCC 700601 / ES114) (Vibrio fischeri) protein is 5-methyltetrahydropteroyltriglutamate--homocysteine methyltransferase.